A 466-amino-acid chain; its full sequence is Hydroxyproline dehydrogenase (466 aa).

It belongs to the proline oxidase family. FAD is required as a cofactor.

The catalysed reaction is trans-4-hydroxy-L-proline + a quinone = (3R,5S)-1-pyrroline-3-hydroxy-5-carboxylate + a quinol + H(+). It catalyses the reaction L-proline + a quinone = (S)-1-pyrroline-5-carboxylate + a quinol + H(+). It functions in the pathway amino-acid degradation; L-proline degradation into L-glutamate; L-glutamate from L-proline: step 1/2. Dehydrogenase that converts trans-4-L-hydroxyproline to delta-1-pyrroline-3-hydroxy-5-carboxylate (Hyp) using a quinone as the terminal electron acceptor. Can also use proline as a substrate but with a very much lower efficiency. Does not react with other diastereomers of Hyp: trans-4-D-hydroxyproline and cis-4-L-hydroxyproline. The chain is Hydroxyproline dehydrogenase (prodh2) from Xenopus laevis (African clawed frog).